Consider the following 296-residue polypeptide: Endochitinase 3 (296 aa).

A GH18 domain is found at 12 to 296 (HKLTVYWGAE…VKNGQLPEED (285 aa)). N-linked (GlcNAc...) asparagine glycans are attached at residues Asn32 and Asn152. Glu153 (proton donor) is an active-site residue. Asn228 carries an N-linked (GlcNAc...) asparagine glycan.

The protein belongs to the glycosyl hydrolase 18 family. Chitinase class III subfamily.

It localises to the secreted. It catalyses the reaction Random endo-hydrolysis of N-acetyl-beta-D-glucosaminide (1-&gt;4)-beta-linkages in chitin and chitodextrins.. Its function is as follows. Secreted chitinase involved in the degradation of chitin, a component of the cell walls of fungi and exoskeletal elements of some animals (including worms and arthropods). Participates in the infection process and directly acts in the penetration process of the host cuticle. Involved in heat-shock adaptation. This Metarhizium anisopliae (Entomophthora anisopliae) protein is Endochitinase 3 (chi3).